The chain runs to 116 residues: Iron-sulfur cluster insertion protein ErpA (116 aa).

The iron-sulfur cluster site is built by Cys-44, Cys-108, and Cys-110.

Belongs to the HesB/IscA family. In terms of assembly, homodimer. Iron-sulfur cluster serves as cofactor.

Required for insertion of 4Fe-4S clusters for at least IspG. The polypeptide is Iron-sulfur cluster insertion protein ErpA (Shewanella piezotolerans (strain WP3 / JCM 13877)).